We begin with the raw amino-acid sequence, 362 residues long: MKTLHVDLGDRSYPIFIGAGLLANPEKFLPYLAAKQVLVVTNTTIDALYGDSFFSLFEGMDKAHKVVLPDGESYKNLEALNQIFDALLEGKHNRKTTLVALGGGVVGDMTGFAAAAYQRGVGFIQVPTTLLSQVDSSVGGKTGVNHPLGKNMIGAFHQPNVVVIDTDVLKTLPDRELSAGMAEVIKYGLIADYEFFCWLESNVKALMARDVDALEYAIERSCQIKADVVAQDETESGIRAILNLGHTFGHAIESDQGYGNWLHGEAVGAGMVMACELSCRMGWIDKPFCERAVALIAAAGLPIAPPESMSPEDFMKYMAVDKKVLDGGLRLVLPNKPGSSIVTDSFDADALAATLGRTGQLG.

Residues 70-75, 104-108, 128-129, Lys-141, and Lys-150 contribute to the NAD(+) site; these read DGESYK, GVVGD, and TT. 3 residues coordinate Zn(2+): Glu-183, His-246, and His-263.

Belongs to the sugar phosphate cyclases superfamily. Dehydroquinate synthase family. Requires Co(2+) as cofactor. Zn(2+) serves as cofactor. NAD(+) is required as a cofactor.

The protein localises to the cytoplasm. The enzyme catalyses 7-phospho-2-dehydro-3-deoxy-D-arabino-heptonate = 3-dehydroquinate + phosphate. Its pathway is metabolic intermediate biosynthesis; chorismate biosynthesis; chorismate from D-erythrose 4-phosphate and phosphoenolpyruvate: step 2/7. Functionally, catalyzes the conversion of 3-deoxy-D-arabino-heptulosonate 7-phosphate (DAHP) to dehydroquinate (DHQ). The polypeptide is 3-dehydroquinate synthase (Saccharophagus degradans (strain 2-40 / ATCC 43961 / DSM 17024)).